A 634-amino-acid chain; its full sequence is Chaperone protein HtpG (634 aa).

Residues 1–342 (MTVDTDKQTL…SADLSLNVSR (342 aa)) form an a; substrate-binding region. The interval 343–559 (EILQSGPVVD…QGDLGLQMRQ (217 aa)) is b. The segment at 560–634 (LLEASGQAVP…LNKLLLELSA (75 aa)) is c.

The protein belongs to the heat shock protein 90 family. Homodimer.

The protein localises to the cytoplasm. Its function is as follows. Molecular chaperone. Has ATPase activity. The sequence is that of Chaperone protein HtpG from Xanthomonas campestris pv. campestris (strain 8004).